The following is a 267-amino-acid chain: Tryptophan synthase alpha chain (267 aa).

Active-site proton acceptor residues include glutamate 43 and aspartate 54.

Belongs to the TrpA family. As to quaternary structure, tetramer of two alpha and two beta chains.

It carries out the reaction (1S,2R)-1-C-(indol-3-yl)glycerol 3-phosphate + L-serine = D-glyceraldehyde 3-phosphate + L-tryptophan + H2O. It participates in amino-acid biosynthesis; L-tryptophan biosynthesis; L-tryptophan from chorismate: step 5/5. Functionally, the alpha subunit is responsible for the aldol cleavage of indoleglycerol phosphate to indole and glyceraldehyde 3-phosphate. This is Tryptophan synthase alpha chain from Bacillus subtilis (strain 168).